The primary structure comprises 240 residues: Protein GrpE (240 aa).

The span at 1–13 (MTDNQRQSTTDGQ) shows a compositional bias: polar residues. The segment at 1–89 (MTDNQRQSTT…DAEQKAEEHW (89 aa)) is disordered. Residues 20 to 38 (AQATAEAAEQTQATQASAA) show a composition bias toward low complexity. The span at 65–89 (EALRQRVEELEKALADAEQKAEEHW) shows a compositional bias: basic and acidic residues.

The protein belongs to the GrpE family. Homodimer.

The protein localises to the cytoplasm. Functionally, participates actively in the response to hyperosmotic and heat shock by preventing the aggregation of stress-denatured proteins, in association with DnaK and GrpE. It is the nucleotide exchange factor for DnaK and may function as a thermosensor. Unfolded proteins bind initially to DnaJ; upon interaction with the DnaJ-bound protein, DnaK hydrolyzes its bound ATP, resulting in the formation of a stable complex. GrpE releases ADP from DnaK; ATP binding to DnaK triggers the release of the substrate protein, thus completing the reaction cycle. Several rounds of ATP-dependent interactions between DnaJ, DnaK and GrpE are required for fully efficient folding. The chain is Protein GrpE from Halorhodospira halophila (strain DSM 244 / SL1) (Ectothiorhodospira halophila (strain DSM 244 / SL1)).